Here is a 178-residue protein sequence, read N- to C-terminus: Large ribosomal subunit protein bL25 (178 aa).

Belongs to the bacterial ribosomal protein bL25 family. CTC subfamily. Part of the 50S ribosomal subunit; part of the 5S rRNA/L5/L18/L25 subcomplex. Contacts the 5S rRNA. Binds to the 5S rRNA independently of L5 and L18.

Its function is as follows. This is one of the proteins that binds to the 5S RNA in the ribosome where it forms part of the central protuberance. This Campylobacter lari (strain RM2100 / D67 / ATCC BAA-1060) protein is Large ribosomal subunit protein bL25.